A 169-amino-acid chain; its full sequence is Cell division inhibitor SulA (169 aa).

The ftsZ binding stretch occupies residues 106-112 (ALRTGNY). Positions 162–169 (KIHSNLYH) are lon protease binding.

This sequence belongs to the SulA family. As to quaternary structure, interacts with FtsZ. In terms of processing, is rapidly cleaved and degraded by the Lon protease once DNA damage is repaired.

In terms of biological role, component of the SOS system and an inhibitor of cell division. Accumulation of SulA causes rapid cessation of cell division and the appearance of long, non-septate filaments. In the presence of GTP, binds a polymerization-competent form of FtsZ in a 1:1 ratio, thus inhibiting FtsZ polymerization and therefore preventing it from participating in the assembly of the Z ring. This mechanism prevents the premature segregation of damaged DNA to daughter cells during cell division. The polypeptide is Cell division inhibitor SulA (Shigella boydii serotype 4 (strain Sb227)).